Here is a 185-residue protein sequence, read N- to C-terminus: Potassium-transporting ATPase KdpC subunit (185 aa).

Residues 14–34 (ALSLLTGVAYPLALTGIAAVI) form a helical membrane-spanning segment.

It belongs to the KdpC family. The system is composed of three essential subunits: KdpA, KdpB and KdpC.

The protein localises to the cell inner membrane. Part of the high-affinity ATP-driven potassium transport (or Kdp) system, which catalyzes the hydrolysis of ATP coupled with the electrogenic transport of potassium into the cytoplasm. This subunit acts as a catalytic chaperone that increases the ATP-binding affinity of the ATP-hydrolyzing subunit KdpB by the formation of a transient KdpB/KdpC/ATP ternary complex. This Cereibacter sphaeroides (strain ATCC 17023 / DSM 158 / JCM 6121 / CCUG 31486 / LMG 2827 / NBRC 12203 / NCIMB 8253 / ATH 2.4.1.) (Rhodobacter sphaeroides) protein is Potassium-transporting ATPase KdpC subunit.